We begin with the raw amino-acid sequence, 201 residues long: 3-isopropylmalate dehydratase small subunit (201 aa).

This sequence belongs to the LeuD family. LeuD type 1 subfamily. As to quaternary structure, heterodimer of LeuC and LeuD.

It carries out the reaction (2R,3S)-3-isopropylmalate = (2S)-2-isopropylmalate. The protein operates within amino-acid biosynthesis; L-leucine biosynthesis; L-leucine from 3-methyl-2-oxobutanoate: step 2/4. Its function is as follows. Catalyzes the isomerization between 2-isopropylmalate and 3-isopropylmalate, via the formation of 2-isopropylmaleate. The chain is 3-isopropylmalate dehydratase small subunit from Shigella flexneri serotype 5b (strain 8401).